We begin with the raw amino-acid sequence, 40 residues long: MITDVQLAIFSNVLGVFLFLLVVAYHYINANTGKSSIKTK.

Over 1 to 4 (MITD) the chain is Lumenal. Residues 5–25 (VQLAIFSNVLGVFLFLLVVAY) form a helical membrane-spanning segment. Residues 26-40 (HYINANTGKSSIKTK) lie on the Cytoplasmic side of the membrane.

It belongs to the OST4 family. In terms of assembly, component of the oligosaccharyltransferase (OST) complex.

It is found in the endoplasmic reticulum membrane. In terms of biological role, subunit of the oligosaccharyl transferase (OST) complex that catalyzes the initial transfer of a defined glycan (Glc(3)Man(9)GlcNAc(2) in eukaryotes) from the lipid carrier dolichol-pyrophosphate to an asparagine residue within an Asn-X-Ser/Thr consensus motif in nascent polypeptide chains, the first step in protein N-glycosylation. N-glycosylation occurs cotranslationally and the complex associates with the Sec61 complex at the channel-forming translocon complex that mediates protein translocation across the endoplasmic reticulum (ER). All subunits are required for a maximal enzyme activity. This is Dolichyl-diphosphooligosaccharide--protein glycosyltransferase subunit 4 from Drosophila virilis (Fruit fly).